The following is a 134-amino-acid chain: uncharacterized protein (134 aa).

The interval 59 to 92 (VSKPKRRSPHPHGNKAADKRKTTEKEPERKKRVG) is disordered. Over residues 61 to 71 (KPKRRSPHPHG) the composition is skewed to basic residues. Residues 73–87 (KAADKRKTTEKEPER) are compositionally biased toward basic and acidic residues.

This is an uncharacterized protein from Saccharomyces cerevisiae (strain ATCC 204508 / S288c) (Baker's yeast).